A 380-amino-acid chain; its full sequence is Cytochrome b (380 aa).

The next 4 membrane-spanning stretches (helical) occupy residues 34–54 (FGSLLGICLITQILTGLLLAA), 78–99 (WLIRNLHANGASFFFICIYLHI), 114–134 (WNTGVTLLLTLMATAFVGYVL), and 179–199 (FFALHFLLPFMIAGLTLIHLT). Residues histidine 84 and histidine 98 each coordinate heme b. Heme b is bound by residues histidine 183 and histidine 197. Histidine 202 serves as a coordination point for a ubiquinone. Helical transmembrane passes span 227–247 (LKDILGFAIMLLLLTTLALFS), 289–309 (LGGVLALAASVLILFLTPFLH), 321–341 (LSQLLFWLLVANLLILTWVGS), and 348–368 (FIIIGQMASITYFIIILVLFP).

This sequence belongs to the cytochrome b family. In terms of assembly, the cytochrome bc1 complex contains 11 subunits: 3 respiratory subunits (MT-CYB, CYC1 and UQCRFS1), 2 core proteins (UQCRC1 and UQCRC2) and 6 low-molecular weight proteins (UQCRH/QCR6, UQCRB/QCR7, UQCRQ/QCR8, UQCR10/QCR9, UQCR11/QCR10 and a cleavage product of UQCRFS1). This cytochrome bc1 complex then forms a dimer. The cofactor is heme b.

Its subcellular location is the mitochondrion inner membrane. In terms of biological role, component of the ubiquinol-cytochrome c reductase complex (complex III or cytochrome b-c1 complex) that is part of the mitochondrial respiratory chain. The b-c1 complex mediates electron transfer from ubiquinol to cytochrome c. Contributes to the generation of a proton gradient across the mitochondrial membrane that is then used for ATP synthesis. The sequence is that of Cytochrome b (MT-CYB) from Pharomachrus antisianus (Crested quetzal).